We begin with the raw amino-acid sequence, 226 residues long: Octanoyltransferase (226 aa).

In terms of domain architecture, BPL/LPL catalytic spans 34–212; sequence LAAPDVLLTL…AFSRVFGLEF (179 aa). Residues 76 to 83, 143 to 145, and 156 to 158 contribute to the substrate site; these read RGGDVTYH, AIG, and GIA. C174 serves as the catalytic Acyl-thioester intermediate.

This sequence belongs to the LipB family.

It localises to the cytoplasm. The catalysed reaction is octanoyl-[ACP] + L-lysyl-[protein] = N(6)-octanoyl-L-lysyl-[protein] + holo-[ACP] + H(+). It functions in the pathway protein modification; protein lipoylation via endogenous pathway; protein N(6)-(lipoyl)lysine from octanoyl-[acyl-carrier-protein]: step 1/2. In terms of biological role, catalyzes the transfer of endogenously produced octanoic acid from octanoyl-acyl-carrier-protein onto the lipoyl domains of lipoate-dependent enzymes. Lipoyl-ACP can also act as a substrate although octanoyl-ACP is likely to be the physiological substrate. This chain is Octanoyltransferase, found in Thermosynechococcus vestitus (strain NIES-2133 / IAM M-273 / BP-1).